A 416-amino-acid chain; its full sequence is Proline-serine-threonine phosphatase-interacting protein 1 (416 aa).

Positions 5–264 (LQFKDAFWCR…TLEGCSIDAD (260 aa)) constitute an F-BAR domain. Positions 166-212 (HQKQVEKSQNKARQCKDSATEAERVYRQSIAQLEKVRAEWEQEHRTT) form a coiled coil. A Phosphoserine modification is found at serine 318. The residue at position 345 (tyrosine 345) is a Phosphotyrosine. The SH3 domain occupies 359–416 (SPAQEYRALYDYTAQNPDELDLSAGDILEVILEGEDGWWTVERNGQRGFVPGSYLEKL).

Homodimer. Homotrimer. Interacts (via coiled-coil domain) with CD2AP, PTPN12 and PTPN18. Interacts (via SH3 domain) with ABL1 and WAS. Interacts (via SH3 and coiled-coil domains) with MEFV (via B-box zinc finger); the interaction allows binding of MEFV to PYCARD and facilitates formation of PYCARD pyroptosomes. Interacts with CD2, DNM2 and FASLG. In terms of processing, dephosphorylated on Tyr-345 by PTPN18, this event negatively regulates the association of PSTPIP1 with SH2 domain-containing proteins as tyrosine kinase. Phosphorylation of Tyr-345 is probably required for subsequent phosphorylation at other tyrosine residues. Phosphorylation is induced by activation of the EGFR and PDGFR in a ABL1 dependent manner. The phosphorylation regulates the interaction with WAS and with MEFV. Highly expressed in the peripheral blood leukocytes, granulocytes and monocytes, namely in T-cells and natural killer cells, and in spleen. Weakly expressed in the thymus, small intestine, lung and placenta.

The protein resides in the cytoplasm. Its subcellular location is the cell membrane. The protein localises to the cell projection. It localises to the uropodium. It is found in the cytoskeleton. The protein resides in the perinuclear region. Its subcellular location is the lamellipodium. The protein localises to the cleavage furrow. Involved in regulation of the actin cytoskeleton. May regulate WAS actin-bundling activity. Bridges the interaction between ABL1 and PTPN18 leading to ABL1 dephosphorylation. May play a role as a scaffold protein between PTPN12 and WAS and allow PTPN12 to dephosphorylate WAS. Has the potential to physically couple CD2 and CD2AP to WAS. Acts downstream of CD2 and CD2AP to recruit WAS to the T-cell:APC contact site so as to promote the actin polymerization required for synapse induction during T-cell activation. Down-regulates CD2-stimulated adhesion through the coupling of PTPN12 to CD2. Also has a role in innate immunity and the inflammatory response. Recruited to inflammasomes by MEFV. Induces formation of pyroptosomes, large supramolecular structures composed of oligomerized PYCARD dimers which form prior to inflammatory apoptosis. Binding to MEFV allows MEFV to bind to PYCARD and facilitates pyroptosome formation. Regulates endocytosis and cell migration in neutrophils. This Homo sapiens (Human) protein is Proline-serine-threonine phosphatase-interacting protein 1 (PSTPIP1).